The sequence spans 467 residues: Cysteine--tRNA ligase (467 aa).

C29 is a binding site for Zn(2+). Positions 31–41 (PTVYDDSHLGH) match the 'HIGH' region motif. The interval 155-174 (KLSGRGEDLEQVSRIESSEE) is disordered. Positions 158–174 (GRGEDLEQVSRIESSEE) are enriched in basic and acidic residues. Zn(2+) contacts are provided by C210, H239, and E243. Positions 271 to 275 (KMSKS) match the 'KMSKS' region motif. Residue K274 coordinates ATP.

It belongs to the class-I aminoacyl-tRNA synthetase family. Monomer. The cofactor is Zn(2+).

Its subcellular location is the cytoplasm. The catalysed reaction is tRNA(Cys) + L-cysteine + ATP = L-cysteinyl-tRNA(Cys) + AMP + diphosphate. The protein is Cysteine--tRNA ligase of Wolinella succinogenes (strain ATCC 29543 / DSM 1740 / CCUG 13145 / JCM 31913 / LMG 7466 / NCTC 11488 / FDC 602W) (Vibrio succinogenes).